An 82-amino-acid polypeptide reads, in one-letter code: Ferredoxin (82 aa).

The region spanning 3-31 (KYTIVDKDTCIACGACGAAAPDIYDYDDE) is the 4Fe-4S ferredoxin-type domain. [4Fe-4S] cluster contacts are provided by cysteine 12, cysteine 15, cysteine 18, and cysteine 62.

Requires [4Fe-4S] cluster as cofactor.

Ferredoxins are iron-sulfur proteins that transfer electrons in a wide variety of metabolic reactions. This ferredoxin may act as a phosphodonor to cytochrome P450 BioI. The protein is Ferredoxin (fer) of Bacillus subtilis (strain 168).